The chain runs to 755 residues: Xaa-Pro dipeptidyl-peptidase (755 aa).

Catalysis depends on charge relay system residues Ser348, Asp468, and His498.

The protein belongs to the peptidase S15 family. Homodimer.

It localises to the cytoplasm. The catalysed reaction is Hydrolyzes Xaa-Pro-|- bonds to release unblocked, N-terminal dipeptides from substrates including Ala-Pro-|-p-nitroanilide and (sequentially) Tyr-Pro-|-Phe-Pro-|-Gly-Pro-|-Ile.. Its function is as follows. Removes N-terminal dipeptides sequentially from polypeptides having unsubstituted N-termini provided that the penultimate residue is proline. This Streptococcus thermophilus (strain ATCC BAA-491 / LMD-9) protein is Xaa-Pro dipeptidyl-peptidase.